We begin with the raw amino-acid sequence, 106 residues long: Thioredoxin (106 aa).

Residues 2-106 enclose the Thioredoxin domain; sequence SHYIELTEEN…LKEQLNKLLG (105 aa). Cysteine 30 and cysteine 33 form a disulfide bridge.

The protein belongs to the thioredoxin family.

Participates in various redox reactions through the reversible oxidation of its active center dithiol to a disulfide and catalyzes dithiol-disulfide exchange reactions. This chain is Thioredoxin (trxA), found in Helicobacter pylori (strain J99 / ATCC 700824) (Campylobacter pylori J99).